The primary structure comprises 320 residues: Glutaminase (320 aa).

The substrate site is built by Ser-70, Asn-121, Glu-165, Asn-172, Tyr-196, Tyr-248, and Val-266.

Belongs to the glutaminase family. In terms of assembly, homotetramer.

The enzyme catalyses L-glutamine + H2O = L-glutamate + NH4(+). The sequence is that of Glutaminase from Mycobacterium marinum (strain ATCC BAA-535 / M).